A 428-amino-acid polypeptide reads, in one-letter code: MKRSLFKSLYFQVLTAIAIGILLGHFYPELGAQMKPLGDAFVKLIKMIIAPVIFCTVVTGIAGMESMKAVGRTGAVALLYFEIVSTIALIIGLVIVNLVQPGAGMNVDPATLDAKAVAVYAEQAQQQGIVAFLMDVIPSSVIGAFASGNILQVLLFAVLFGFALHRLGRNGQLIFNVIESFSQVIFGIINMIMRLAPIGAFGAMAFTIGKYGVGTLVQLGQLIVCFYITCILFVVVVLGSIARATGFNIFKFIRYIREELLIVLGTSSSESALPRMLDKMEKLGCRKSVVGLVIPTGYSFNLDGTSIYLTMAAVFIAQATNSHMDIFHQITLLVVLLLSSKGAAGVTGSGFIVLAATISAVGHLPVAGLALILGIDRFMSEARALTNLVGNGVATIVVAKWVKELDEKQLNDTLNNKNSAAKTQQISS.

9 helical membrane passes run 8–28 (SLYF…HFYP), 44–64 (LIKM…IAGM), 76–96 (VALL…LVIV), 142–162 (IGAF…LFGF), 184–204 (VIFG…FGAM), 222–242 (LIVC…GSIA), 289–309 (VVGL…SIYL), 326–346 (IFHQ…AAGV), and 352–372 (IVLA…LALI).

The protein belongs to the dicarboxylate/amino acid:cation symporter (DAACS) (TC 2.A.23) family.

It is found in the cell inner membrane. In terms of biological role, responsible for the transport of dicarboxylates such as succinate, fumarate, and malate from the periplasm across the membrane. The polypeptide is C4-dicarboxylate transport protein (Cronobacter sakazakii (strain ATCC BAA-894) (Enterobacter sakazakii)).